A 622-amino-acid chain; its full sequence is Low affinity potassium transport system protein Kup (622 aa).

12 helical membrane-spanning segments follow: residues 12–32 (ITLAAIGVVYGDIGTSPLYTL), 49–69 (VFGFLSLIFWLLIFVVSIKYL), 103–123 (VIMGLIGGSFFYGEVVITPAI), 137–157 (PQLDTWIVPLSIIVLTLLFMI), 165–185 (VGKLFAPIMLTWFLILAVLGL), 213–233 (VSFIALGAVVLSITGVEALYA), 247–267 (WFTVVLPSLVLNYFGQGALLL), 276–296 (PFFLLAPDWALIPLLILAALA), 337–357 (IYIPFVNWLLYFAVVVVIVSF), 363–383 (LAAAYGIAVTGTMVLTSILST), 396–416 (FVALILIAFLCVDIPLFSANL), and 419–439 (LLSGGWLPLSLGLIMFTIMTT).

The protein belongs to the HAK/KUP transporter (TC 2.A.72) family.

The protein localises to the cell inner membrane. It carries out the reaction K(+)(in) + H(+)(in) = K(+)(out) + H(+)(out). Its function is as follows. Responsible for the low-affinity transport of potassium into the cell. Likely operates as a K(+):H(+) symporter. This Salmonella gallinarum (strain 287/91 / NCTC 13346) protein is Low affinity potassium transport system protein Kup.